A 963-amino-acid polypeptide reads, in one-letter code: Protocadherin alpha-C1 (963 aa).

Residues 1-18 (MVGWGVAVLCLWVSCGAA) form the signal peptide. 5 Cadherin domains span residues 19-124 (AGQL…SPLF), 125-233 (PAGD…APVF), 234-340 (ERSV…APEL), 349-445 (VPED…TPSF), and 446-555 (PQPQ…YPVI). At 19-683 (AGQLEYSVPE…GGQLSAQNLY (665 aa)) the chain is on the extracellular side. N38 is a glycosylation site (N-linked (GlcNAc...) asparagine). N-linked (GlcNAc...) asparagine glycans are attached at residues N248 and N274. A glycan (N-linked (GlcNAc...) asparagine) is linked at N562. The Cadherin 6 domain occupies 570-667 (VPRSARTGHL…NSVPQLLPDF (98 aa)). Residues 684 to 704 (LVIALACISFLFLGCLLFFVC) form a helical membrane-spanning segment. Over 705–963 (TKLHQSPGCC…GNSTTDNSDQ (259 aa)) the chain is Cytoplasmic. 4 PXXP repeats span residues 812–815 (PRQP), 845–848 (PGGP), 886–889 (PGNP), and 904–907 (PGSP). Positions 812–907 (PRQPNPDWRY…PDKFIIPGSP (96 aa)) are 4 X 4 AA repeats of P-X-X-P. Residues 844–902 (GPGGPDQQWPTVSSATPEPEAGEVSPPVGAGVNSNSWTFKYGPGNPKQSGPGELPDKFI) form a disordered region. Residues 914-963 (QEPANSQIDKSDFITFGKKEETKKKKKKKKGNKTQEKKEKGNSTTDNSDQ) form a disordered region. Residues 922–936 (DKSDFITFGKKEETK) show a composition bias toward basic and acidic residues.

It localises to the cell membrane. In terms of biological role, potential calcium-dependent cell-adhesion protein. May be involved in the establishment and maintenance of specific neuronal connections in the brain. The chain is Protocadherin alpha-C1 (PCDHAC1) from Pan troglodytes (Chimpanzee).